We begin with the raw amino-acid sequence, 201 residues long: Single-stranded DNA-binding protein, mitochondrial (201 aa).

The SSB domain maps to Val71 to Tyr184.

Its subcellular location is the mitochondrion. In terms of biological role, binds to ss-DNA. In Arabidopsis thaliana (Mouse-ear cress), this protein is Single-stranded DNA-binding protein, mitochondrial.